The following is a 545-amino-acid chain: CTP synthase (545 aa).

Residues 1 to 265 (MSRFIFVTGG…DAIVVEKFGL (265 aa)) form an amidoligase domain region. CTP is bound at residue Ser13. Residue Ser13 coordinates UTP. 14–19 (SLGKGI) is an ATP binding site. Tyr54 provides a ligand contact to L-glutamine. Asp71 lines the ATP pocket. Positions 71 and 139 each coordinate Mg(2+). CTP contacts are provided by residues 146–148 (DIE), 186–191 (KTKPTQ), and Lys222. Residues 186 to 191 (KTKPTQ) and Lys222 contribute to the UTP site. The Glutamine amidotransferase type-1 domain occupies 290–541 (TVGMVGKYIE…VAAALAEQKA (252 aa)). Residue Gly351 participates in L-glutamine binding. The Nucleophile; for glutamine hydrolysis role is filled by Cys378. Residues 379 to 382 (LGMQ), Glu402, and Arg469 contribute to the L-glutamine site. Catalysis depends on residues His514 and Glu516.

Belongs to the CTP synthase family. In terms of assembly, homotetramer.

The catalysed reaction is UTP + L-glutamine + ATP + H2O = CTP + L-glutamate + ADP + phosphate + 2 H(+). It carries out the reaction L-glutamine + H2O = L-glutamate + NH4(+). The enzyme catalyses UTP + NH4(+) + ATP = CTP + ADP + phosphate + 2 H(+). It participates in pyrimidine metabolism; CTP biosynthesis via de novo pathway; CTP from UDP: step 2/2. With respect to regulation, allosterically activated by GTP, when glutamine is the substrate; GTP has no effect on the reaction when ammonia is the substrate. The allosteric effector GTP functions by stabilizing the protein conformation that binds the tetrahedral intermediate(s) formed during glutamine hydrolysis. Inhibited by the product CTP, via allosteric rather than competitive inhibition. Functionally, catalyzes the ATP-dependent amination of UTP to CTP with either L-glutamine or ammonia as the source of nitrogen. Regulates intracellular CTP levels through interactions with the four ribonucleotide triphosphates. The sequence is that of CTP synthase from Alcanivorax borkumensis (strain ATCC 700651 / DSM 11573 / NCIMB 13689 / SK2).